The chain runs to 504 residues: Tyrosine-protein phosphatase non-receptor type substrate 1 (504 aa).

The first 30 residues, 1–30 (MEPAGPAPGRLGPLLCLLLAASCAWSGVAG), serve as a signal peptide directing secretion. Topologically, residues 31 to 373 (EEELQVIQPD…NTGSNERNIY (343 aa)) are extracellular. The region spanning 32–137 (EELQVIQPDK…SPDDVEFKSG (106 aa)) is the Ig-like V-type domain. Disulfide bonds link C55–C121 and C170–C228. 2 Ig-like C1-type domains span residues 148-247 (PSAP…ANLS) and 254-348 (PTLE…HDLK). Residues N245, N270, N292, and N319 are each glycosylated (N-linked (GlcNAc...) asparagine). Residues C273 and C331 are joined by a disulfide bond. Basic and acidic residues predominate over residues 336–355 (DGQPAVSKSHDLKVSAHPKE). Residues 336–364 (DGQPAVSKSHDLKVSAHPKEQGSNTAAEN) are disordered. Residues 374–394 (IVVGVVCTLLVALLMAALYLV) traverse the membrane as a helical segment. Over 395-504 (RIRQKKAQGS…EYASVQVPRK (110 aa)) the chain is Cytoplasmic. Residues 402–504 (QGSTSSTRLH…EYASVQVPRK (103 aa)) are disordered. The span at 409 to 421 (RLHEPEKNAREIT) shows a compositional bias: basic and acidic residues. Phosphotyrosine; by Tyr-kinases is present on Y429. Residues 429 to 432 (YADL) carry the SH2-binding motif. Positions 439–444 (KPAPQA) match the SH3-binding motif. Residues 446 to 467 (EPNNHTEYASIQTSPQPASEDT) show a composition bias toward polar residues. 2 positions are modified to phosphotyrosine; by Tyr-kinases: Y453 and Y470. 3 short sequence motifs (SH2-binding) span residues 453-456 (YASI), 470-473 (YADL), and 496-499 (YASV). Position 496 is a phosphotyrosine (Y496).

As to quaternary structure, binds PTPN11 when tyrosine-phosphorylated, except in macrophages, where it primarily binds PTPN6. Binds GRB2 in vitro. Binds FGR. Binds JAK2 irrespective of its phosphorylation status and forms a stable complex. Binds SCAP1 and/or SCAP2. The resulting complex recruits FYB1. Binds PTK2B. Interacts with TRIM2. Post-translationally, N-glycosylated. Phosphorylated on tyrosine residues in response to stimulation with EGF, growth hormone, insulin and PDGF. Dephosphorylated by PTPN11. Ubiquitous. Highly expressed in brain. Detected on myeloid cells, but not T-cells. Detected at lower levels in heart, placenta, lung, testis, ovary, colon, liver, small intestine, prostate, spleen, kidney, skeletal muscle and pancreas.

Its subcellular location is the membrane. Functionally, immunoglobulin-like cell surface receptor for CD47. Acts as docking protein and induces translocation of PTPN6, PTPN11 and other binding partners from the cytosol to the plasma membrane. Supports adhesion of cerebellar neurons, neurite outgrowth and glial cell attachment. May play a key role in intracellular signaling during synaptogenesis and in synaptic function. Involved in the negative regulation of receptor tyrosine kinase-coupled cellular responses induced by cell adhesion, growth factors or insulin. Mediates negative regulation of phagocytosis, mast cell activation and dendritic cell activation. CD47 binding prevents maturation of immature dendritic cells and inhibits cytokine production by mature dendritic cells. Plays a role in antiviral immunity and limits new world arenavirus infection by decreasing virus internalization. Receptor for THBS1. Interaction with THBS1 stimulates phosphorylation of SIRPA. In response to THBS1, involved in ROS signaling in non-phagocytic cells, stimulating NADPH oxidase-derived ROS production. The protein is Tyrosine-protein phosphatase non-receptor type substrate 1 (SIRPA) of Homo sapiens (Human).